We begin with the raw amino-acid sequence, 260 residues long: Myb transcription factor 42 (260 aa).

HTH myb-type domains follow at residues 9-61 (KAHT…INYL) and 62-116 (RPDL…RRKL). DNA-binding regions (H-T-H motif) lie at residues 37-61 (WRSL…INYL) and 89-112 (WSLI…NTHI).

As to expression, mainly expressed in the aerial parts and, to a lower extent, in roots.

Its subcellular location is the nucleus. Its function is as follows. Transcription factor that negatively regulates the expression of caffeic acid O-methyl-transferase genes (COMTs) and of other genes involved in the biosynthesis of lignin, thus preventing lignification. The sequence is that of Myb transcription factor 42 from Zea mays (Maize).